Reading from the N-terminus, the 223-residue chain is Ribonuclease 3 (223 aa).

The region spanning 4–127 is the RNase III domain; that stretch reads LEEFERNLGY…VMGAIYLEAG (124 aa). Glu-40 is a Mg(2+) binding site. Asp-44 is an active-site residue. Mg(2+) is bound by residues Asp-113 and Glu-116. Glu-116 is an active-site residue. A DRBM domain is found at 154–223; that stretch reads DYKTALQEVT…AKIALEKIKK (70 aa).

It belongs to the ribonuclease III family. As to quaternary structure, homodimer. Mg(2+) is required as a cofactor.

The protein localises to the cytoplasm. The enzyme catalyses Endonucleolytic cleavage to 5'-phosphomonoester.. Its function is as follows. Digests double-stranded RNA. Involved in the processing of primary rRNA transcript to yield the immediate precursors to the large and small rRNAs (23S and 16S). Processes some mRNAs, and tRNAs when they are encoded in the rRNA operon. Processes pre-crRNA and tracrRNA of type II CRISPR loci if present in the organism. The sequence is that of Ribonuclease 3 from Campylobacter concisus (strain 13826).